Here is a 600-residue protein sequence, read N- to C-terminus: Aspartate--tRNA(Asp/Asn) ligase (600 aa).

Residue glutamate 176 coordinates L-aspartate. The aspartate stretch occupies residues 200-203 (QQFK). Residues arginine 222 and histidine 452 each contribute to the L-aspartate site. 222–224 (RDE) contributes to the ATP binding site. Glutamate 490 lines the ATP pocket. Residue arginine 497 coordinates L-aspartate. 542-545 (GIDR) contacts ATP.

Belongs to the class-II aminoacyl-tRNA synthetase family. Type 1 subfamily. As to quaternary structure, homodimer.

Its subcellular location is the cytoplasm. The enzyme catalyses tRNA(Asx) + L-aspartate + ATP = L-aspartyl-tRNA(Asx) + AMP + diphosphate. In terms of biological role, aspartyl-tRNA synthetase with relaxed tRNA specificity since it is able to aspartylate not only its cognate tRNA(Asp) but also tRNA(Asn). Reaction proceeds in two steps: L-aspartate is first activated by ATP to form Asp-AMP and then transferred to the acceptor end of tRNA(Asp/Asn). This is Aspartate--tRNA(Asp/Asn) ligase from Rickettsia felis (strain ATCC VR-1525 / URRWXCal2) (Rickettsia azadi).